The following is a 366-amino-acid chain: MDFLNASDQNLTSEELLNRMPSKILVSLTLSGLALMTTTINSLVIAAIIVTRKLHHPANYLICSLAVTDFLVAVLVMPFSIVYIVRESWIMGQVLCDIWLSVDIICCTCSILHLSAIALDRYRAITDAVEYARKRTPRHAGIMITIVWVISVFISMPPLFWRHQGTSRDDECVIKHDHIVSTIYSTFGAFYIPLVLILILYYKIYRAARTLYHKRQASRMIKEELNGQVFLESGEKSIKLVSTSYMLEKSLSDPSTDFDRIHSTVKSPRSELKHEKSWRRQKISGTRERKAATTLGLILGAFVICWLPFFVKELVVNVCEKCKISEEMSNFLAWLGYLNSLINPLIYTIFNEDFKKAFQKLVRCRY.

Over 1 to 24 the chain is Extracellular; it reads MDFLNASDQNLTSEELLNRMPSKI. N-linked (GlcNAc...) asparagine glycans are attached at residues asparagine 5 and asparagine 10. A helical membrane pass occupies residues 25-49; that stretch reads LVSLTLSGLALMTTTINSLVIAAII. Topologically, residues 50 to 59 are cytoplasmic; the sequence is VTRKLHHPAN. Residues 60–81 traverse the membrane as a helical segment; the sequence is YLICSLAVTDFLVAVLVMPFSI. The Extracellular segment spans residues 82–96; it reads VYIVRESWIMGQVLC. A disulfide bridge connects residues cysteine 96 and cysteine 172. The chain crosses the membrane as a helical span at residues 97 to 119; that stretch reads DIWLSVDIICCTCSILHLSAIAL. Positions 103 and 107 each coordinate serotonin. A DRY motif; important for ligand-induced conformation changes motif is present at residues 120–122; it reads DRY. Residues 120-139 are Cytoplasmic-facing; that stretch reads DRYRAITDAVEYARKRTPRH. The chain crosses the membrane as a helical span at residues 140-159; the sequence is AGIMITIVWVISVFISMPPL. At 160 to 178 the chain is on the extracellular side; it reads FWRHQGTSRDDECVIKHDH. Residues 179 to 202 form a helical membrane-spanning segment; the sequence is IVSTIYSTFGAFYIPLVLILILYY. The Cytoplasmic portion of the chain corresponds to 203–291; that stretch reads KIYRAARTLY…KISGTRERKA (89 aa). The chain crosses the membrane as a helical span at residues 292–315; sequence ATTLGLILGAFVICWLPFFVKELV. At 316-327 the chain is on the extracellular side; that stretch reads VNVCEKCKISEE. Residues 328-350 form a helical membrane-spanning segment; sequence MSNFLAWLGYLNSLINPLIYTIF. An NPxxY motif; important for ligand-induced conformation changes and signaling motif is present at residues 343–347; it reads NPLIY. Residues 351 to 366 are Cytoplasmic-facing; it reads NEDFKKAFQKLVRCRY.

This sequence belongs to the G-protein coupled receptor 1 family. As to expression, detected in hippocampus.

Its subcellular location is the cell membrane. G-protein coupled receptor for 5-hydroxytryptamine (serotonin). Also functions as a receptor for various alkaloids and psychoactive substances. Ligand binding causes a conformation change that triggers signaling via guanine nucleotide-binding proteins (G proteins) and modulates the activity of downstream effectors, such as adenylate cyclase. HTR1F is coupled to G(i)/G(o) G alpha proteins and mediates inhibitory neurotransmission by inhibiting adenylate cyclase activity. This chain is 5-hydroxytryptamine receptor 1F (Htr1f), found in Mus musculus (Mouse).